Reading from the N-terminus, the 137-residue chain is Small ribosomal subunit protein uS12 (137 aa).

The disordered stretch occupies residues 1 to 28 (MPTINQLVRKPRKSKAKKSDSPALNKGF). D102 carries the post-translational modification 3-methylthioaspartic acid.

Belongs to the universal ribosomal protein uS12 family. As to quaternary structure, part of the 30S ribosomal subunit. Contacts proteins S8 and S17. May interact with IF1 in the 30S initiation complex.

In terms of biological role, with S4 and S5 plays an important role in translational accuracy. Interacts with and stabilizes bases of the 16S rRNA that are involved in tRNA selection in the A site and with the mRNA backbone. Located at the interface of the 30S and 50S subunits, it traverses the body of the 30S subunit contacting proteins on the other side and probably holding the rRNA structure together. The combined cluster of proteins S8, S12 and S17 appears to hold together the shoulder and platform of the 30S subunit. This chain is Small ribosomal subunit protein uS12, found in Staphylococcus carnosus (strain TM300).